The primary structure comprises 495 residues: Probable serine/threonine-protein kinase DDB_G0292354 (495 aa).

The Protein kinase domain occupies 16–275 (WTVVKKIGQG…PNYVFLQTLL (260 aa)). ATP is bound by residues 22-30 (IGQGAFGEI) and lysine 45. The active-site Proton acceptor is aspartate 136. The disordered stretch occupies residues 293–469 (EVQTNSGASS…NGNGSNSQPI (177 aa)). Low complexity-rich tracts occupy residues 295–333 (QTNSGASSSSSNTTQQQQQQQQQQQQRNLNQSGLNNSSA) and 354–364 (NNSNNNNNNNN). Residues 385 to 395 (ESNSQIANSSE) are compositionally biased toward polar residues. Positions 435 to 466 (SNNNNINNNNNNYNNNNNNNNNSHMNGNGSNS) are enriched in low complexity.

Belongs to the protein kinase superfamily. CK1 Ser/Thr protein kinase family.

In Dictyostelium discoideum (Social amoeba), this protein is Probable serine/threonine-protein kinase DDB_G0292354.